The following is a 225-amino-acid chain: UPF0758 protein BCQ_4241 (225 aa).

The MPN domain maps to 103-225 (SIRSPEDCAR…FVSLKEKGHI (123 aa)). The Zn(2+) site is built by His-174, His-176, and Asp-187. Residues 174 to 187 (HNHPSGDPAPSRED) carry the JAMM motif motif.

This sequence belongs to the UPF0758 family.

The polypeptide is UPF0758 protein BCQ_4241 (Bacillus cereus (strain Q1)).